Reading from the N-terminus, the 161-residue chain is Ribonuclease H (161 aa).

The region spanning Val3–Glu144 is the RNase H type-1 domain. Residues Asp12, Glu50, Asp72, and Asp136 each coordinate Mg(2+).

The protein belongs to the RNase H family. In terms of assembly, monomer. The cofactor is Mg(2+).

It is found in the cytoplasm. The catalysed reaction is Endonucleolytic cleavage to 5'-phosphomonoester.. Endonuclease that specifically degrades the RNA of RNA-DNA hybrids. The sequence is that of Ribonuclease H from Shewanella woodyi (strain ATCC 51908 / MS32).